The sequence spans 643 residues: MSNFYKLLKEKFPRKEDIVTEMINLEAICQLPKGTEYFISDLHGEYDAVDYLLRTGAGSIRAKLLDCFDWQKIVAVDLDDFCILLYYPKEKLAFDKMNLSASAYKTKLWEMIPLQIQVLKYFSSKYTKSKVRKQLSGKFAYIIEELLAEIDRNPEKKSYFDTIIEKLFELDQVEDLIIVLSQTIQVLIIDHLHVVGDIYDRGRYPDRILNRLMAFPNLDIQWGNHDVTWMGAASGSYLCMVNVIRIAARYNNITLIEDRYGINLRRLVDYSRRYYEPLPSFVPILDGEEMTHPDELDLLNMIQQATAILQFKLEAQLIDRRPEFQMHNRQLINQVNYKDLSISIKEVVHQLKDFNSRCIDSKNPSRLTSEEEELLQQLMIAFQTSESLKKHIDFLFEKGSMYLTYNDNLLFHGCIPMHSNGDFKSFKIAGKTYGGRDLLDLFESQIRLAYARPEKHDDLATDIIWYLWCGENSSLFGKNAMTTFERYYVSDKVTHQERKNPYFKLRDKDDICTALLQEFDLPKFGHIVNGHTPVKEKNGEQPIKANGKMLVIDGGFAKGYQKNTGLAGYTLIYNSYGIQLISHLPFTSIEEVLSGTNYIIDTKRLVEEAKDRILVKDTTIGQKLTKEIKDLDHLYRHFQEYDD.

The protein belongs to the FBPase class 3 family. The cofactor is Mn(2+).

It catalyses the reaction beta-D-fructose 1,6-bisphosphate + H2O = beta-D-fructose 6-phosphate + phosphate. Its pathway is carbohydrate biosynthesis; gluconeogenesis. This chain is Fructose-1,6-bisphosphatase class 3, found in Streptococcus agalactiae serotype Ia (strain ATCC 27591 / A909 / CDC SS700).